The sequence spans 1832 residues: Multifunctional protein pyr-3 (1832 aa).

A GATase (Glutamine amidotransferase) region spans residues 2–400 (AATVYRPATA…PGPRDTEFLF (399 aa)). Serine 64, glycine 273, and glycine 275 together coordinate L-glutamine. Residues 228–413 (RILCLDVGMK…IQTVAKCTTD (186 aa)) form the Glutamine amidotransferase type-1 domain. Catalysis depends on cysteine 302, which acts as the Nucleophile; for GATase activity. L-glutamine-binding residues include leucine 303, glutamine 306, asparagine 344, glycine 346, and tyrosine 347. Active-site for GATase activity residues include histidine 386 and glutamate 388. Residues 401–442 (DVFIQTVAKCTTDNTLLQKGVEFPGGTTEENERLHPRVDVKK) are linker. Residues 443–983 (VLVLGSGGLS…SEHDVSFEDR (541 aa)) are CPSase A. The CPSase (Carbamoyl phosphate synthase) stretch occupies residues 443-1484 (VLVLGSGGLS…TNVKNAKILV (1042 aa)). 12 residues coordinate ATP: arginine 560, arginine 600, glycine 606, glycine 607, arginine 637, methionine 639, glutamate 644, glycine 670, isoleucine 671, histidine 672, glutamine 713, and glutamate 727. ATP-grasp domains lie at 564–756 (ARSM…KLGL) and 1102–1293 (SRML…KAIM). The Mg(2+) site is built by glutamine 713, glutamate 727, and asparagine 729. The Mn(2+) site is built by glutamine 713, glutamate 727, and asparagine 729. The interval 984 to 1484 (GVMVLGSGVY…TNVKNAKILV (501 aa)) is CPSase B. Positions 1138, 1177, 1179, 1184, 1209, 1210, 1211, 1212, 1252, and 1264 each coordinate ATP. Mg(2+) contacts are provided by glutamine 1252, glutamate 1264, and asparagine 1266. Glutamine 1252, glutamate 1264, and asparagine 1266 together coordinate Mn(2+). The 149-residue stretch at 1359–1507 (FKVPKKNILL…RDYQTSHTPL (149 aa)) folds into the MGS-like domain. A linker region spans residues 1485–1528 (EAIARYRDMEIGERDYQTSHTPLQLSGQVNFTLQDSLSRPHSFK). Residues 1529–1832 (KAHVLSVEQY…MALLALVMSG (304 aa)) are ATCase (Aspartate transcarbamylase). Carbamoyl phosphate is bound by residues arginine 1581 and threonine 1582. Lysine 1609 provides a ligand contact to L-aspartate. Arginine 1630, histidine 1658, and glutamine 1661 together coordinate carbamoyl phosphate. Positions 1691 and 1754 each coordinate L-aspartate. 2 residues coordinate carbamoyl phosphate: leucine 1793 and proline 1794.

This sequence in the N-terminal section; belongs to the CarA family. The protein in the central section; belongs to the CarB family. It in the C-terminal section; belongs to the aspartate/ornithine carbamoyltransferase superfamily. ATCase family. It depends on Mg(2+) as a cofactor. Mn(2+) serves as cofactor.

It localises to the cytoplasm. It is found in the nucleus. The enzyme catalyses hydrogencarbonate + L-glutamine + 2 ATP + H2O = carbamoyl phosphate + L-glutamate + 2 ADP + phosphate + 2 H(+). It carries out the reaction L-glutamine + H2O = L-glutamate + NH4(+). The catalysed reaction is hydrogencarbonate + NH4(+) + 2 ATP = carbamoyl phosphate + 2 ADP + phosphate + 2 H(+). It catalyses the reaction carbamoyl phosphate + L-aspartate = N-carbamoyl-L-aspartate + phosphate + H(+). Its pathway is pyrimidine metabolism; UMP biosynthesis via de novo pathway; (S)-dihydroorotate from bicarbonate: step 1/3. It functions in the pathway pyrimidine metabolism; UMP biosynthesis via de novo pathway; (S)-dihydroorotate from bicarbonate: step 2/3. Both CPSase and ATCase activities are feedback inhibited by the end product UTP. In terms of biological role, multifunctional protein that encodes the first 2 enzymatic activities of the de novo pyrimidine pathway: carbamoylphosphate synthetase (CPSase; EC 6.3.5.5) and aspartate transcarbamylase (ATCase; EC 2.1.3.2). The CPSase-function is accomplished in 2 steps, by a glutamine-dependent amidotransferase activity (GATase) that binds and cleaves glutamine to produce ammonia, followed by an ammonium-dependent carbamoyl phosphate synthetase, which reacts with the ammonia, hydrogencarbonate and ATP to form carbamoyl phosphate. The endogenously produced carbamoyl phosphate is sequestered and channeled to the ATCase active site. ATCase then catalyzes the formation of carbamoyl-L-aspartate from L-aspartate and carbamoyl phosphate. The protein is Multifunctional protein pyr-3 (pyr-3) of Neurospora crassa (strain ATCC 24698 / 74-OR23-1A / CBS 708.71 / DSM 1257 / FGSC 987).